The sequence spans 929 residues: Thrombospondin-3b (929 aa).

The signal sequence occupies residues 1 to 22 (MELRKIVPNLLVLYVAVHFSQS). The 169-residue stretch at 24–192 (EIKVINVLEL…VESVKLALGG (169 aa)) folds into the Laminin G-like domain. Asn45 carries an N-linked (GlcNAc...) asparagine glycan. Disulfide bonds link Cys277-Cys288, Cys282-Cys299, Cys319-Cys343, Cys349-Cys362, Cys356-Cys371, Cys374-Cys386, Cys392-Cys406, Cys400-Cys416, Cys418-Cys429, Cys445-Cys452, Cys457-Cys477, Cys493-Cys513, Cys516-Cys536, Cys552-Cys572, Cys575-Cys595, Cys613-Cys633, Cys653-Cys673, and Cys689-Cys910. The EGF-like 1; calcium-binding domain occupies 345-384 (DIDECAELSGSCVPNSVCINTVGSFKCGQCKAGFVGNQTV). N-linked (GlcNAc...) asparagine glycosylation is present at Asn381. Positions 388–430 (ARRTCETLGYSPCDVNSHCVMGRNSDVSCVCNVGWAGNGNICG) constitute an EGF-like 2 domain. TSP type-3 repeat units lie at residues 431–465 (PDSDIDGYPDEPLPCMDNDKHCRADNCANTPNSGQ), 466–501 (EDTDGDGIGDQCDEDADGDGIKNVEDNCRLVPNKDQ), 502–524 (QNSDTDSYGDACDNCPNVPNGDQ), 525–560 (LDTDGNGKGDICDTDIDGDGIPNVLDNCPKIPNPMQ), 561–583 (TDRDGDGVGDACDSCPEVNDPLQ), 584–621 (SDMDNDLVGDVCDTNKDIDGDGYQDTRDNCPEVPNSSQ), 622–661 (LDSDNDGIGDECDDDDDNDGIPDILPPGPDNCRLVPNPSQ), and 662–697 (IDTDANGVGDVCETDFDNDKVTDLLDACPESAEVTM). Positions 602–613 (DGDGYQDTRDNC) are enriched in basic and acidic residues. Positions 602–651 (DGDGYQDTRDNCPEVPNSSQLDSDNDGIGDECDDDDDNDGIPDILPPGPD) are disordered. N-linked (GlcNAc...) asparagine glycosylation occurs at Asn618. Acidic residues predominate over residues 624–641 (SDNDGIGDECDDDDDNDG). In terms of domain architecture, TSP C-terminal spans 701–915 (RAFQTVILDP…LGYRCNDSIP (215 aa)). Asn911 carries N-linked (GlcNAc...) asparagine glycosylation.

It belongs to the thrombospondin family. Oligomer; disulfide-linked.

Its function is as follows. Adhesive glycoprotein that mediates cell-to-cell and cell-to-matrix interactions. Can bind to fibrinogen, fibronectin, laminin and type V collagen. In Danio rerio (Zebrafish), this protein is Thrombospondin-3b.